The chain runs to 409 residues: Na(+)-translocating NADH-quinone reductase subunit F (409 aa).

A helical transmembrane segment spans residues phenylalanine 5–phenylalanine 25. Residues glycine 34–isoleucine 128 form the 2Fe-2S ferredoxin-type domain. Residues cysteine 71, cysteine 77, cysteine 80, and cysteine 112 each contribute to the [2Fe-2S] cluster site. One can recognise an FAD-binding FR-type domain in the interval valine 131 to lysine 271.

Belongs to the NqrF family. Composed of six subunits; NqrA, NqrB, NqrC, NqrD, NqrE and NqrF. Requires [2Fe-2S] cluster as cofactor. The cofactor is FAD.

It localises to the cell inner membrane. It catalyses the reaction a ubiquinone + n Na(+)(in) + NADH + H(+) = a ubiquinol + n Na(+)(out) + NAD(+). Its function is as follows. NQR complex catalyzes the reduction of ubiquinone-1 to ubiquinol by two successive reactions, coupled with the transport of Na(+) ions from the cytoplasm to the periplasm. The first step is catalyzed by NqrF, which accepts electrons from NADH and reduces ubiquinone-1 to ubisemiquinone by a one-electron transfer pathway. The sequence is that of Na(+)-translocating NADH-quinone reductase subunit F from Actinobacillus pleuropneumoniae serotype 5b (strain L20).